A 495-amino-acid chain; its full sequence is 2-carboxy-D-arabinitol-1-phosphatase (495 aa).

Residues 1-12 (MLLFAPTPPPSP) are compositionally biased toward pro residues. The segment at 1–23 (MLLFAPTPPPSPATAHRRPGGSA) is disordered. The N-terminal 50 residues, 1–50 (MLLFAPTPPPSPATAHRRPGGSAASCIRCSSVRELDRSPSRPPLPPLAEA), are a transit peptide targeting the chloroplast. Catalysis depends on His58, which acts as the Tele-phosphohistidine intermediate. The Proton donor/acceptor role is filled by Glu132.

Belongs to the phosphoglycerate mutase family.

The protein resides in the plastid. It localises to the chloroplast stroma. The catalysed reaction is 2-carboxy-D-arabinitol 1-phosphate + H2O = 2-carboxy-D-arabinitol + phosphate. With respect to regulation, inactivated by oxidized glutathione (GSSG) at pH 8.0. Functionally, phosphoglycerate mutase-like protein lacking PGM activity, but having 2-carboxy-D-arabinitol 1-phosphate (CA1P) phosphatase activity. Can dephosphorylate the closely related compounds 2-carboxy-D-arabinitol 1,5-bisphosphate (CABP) and 2-carboxy-D-ribitol-1,5-bisphosphate(CRBP), and 2,3-diphosphoglycerate. Prevents the accumulation of D-glycero-2,3-pentodiulose-1,5-bisphosphate (PDBP) a potent inhibitor of ribulose-1,5-bisphosphate carboxylase (RuBisCO). PDBP is produced during the oxidation of ribulose-1,5-bisphosphate, the substrate of RuBisCO. The protein is 2-carboxy-D-arabinitol-1-phosphatase of Triticum aestivum (Wheat).